A 474-amino-acid polypeptide reads, in one-letter code: Magnesium transporter MRS2-A, chloroplastic (474 aa).

The transit peptide at 1 to 55 (MASVSSSPSYSSQAAVLLLLHQPPHQHGHGGACLRYRGSQSQGRGNAVATSLGLS) directs the protein to the chloroplast. The tract at residues 79–129 (GKDGRAVTKDEEEEAAAAAVEEEGEVEVRREEDKPGDDGSREAAARGSGSG) is disordered. Over residues 88 to 103 (DEEEEAAAAAVEEEGE) the composition is skewed to acidic residues. Positions 104–122 (VEVRREEDKPGDDGSREAA) are enriched in basic and acidic residues. 2 consecutive transmembrane segments (helical) span residues 412 to 432 (LLLQ…GIFG) and 444 to 464 (WAFW…FFIM). Residues 432-434 (GMN) carry the Required for magnesium transport activity motif.

It belongs to the CorA metal ion transporter (MIT) (TC 1.A.35.5) family.

Its subcellular location is the plastid. The protein resides in the chloroplast membrane. Magnesium transporter that may mediate the influx of magnesium in chloroplast. This Oryza sativa subsp. japonica (Rice) protein is Magnesium transporter MRS2-A, chloroplastic (MRS2-A).